Reading from the N-terminus, the 335-residue chain is Adenosine deaminase (335 aa).

Residues H12 and H14 each contribute to the Zn(2+) site. Residues H14 and D16 each contribute to the substrate site. H197 lines the Zn(2+) pocket. The active-site Proton donor is the E200. D278 provides a ligand contact to Zn(2+).

It belongs to the metallo-dependent hydrolases superfamily. Adenosine and AMP deaminases family. Adenosine deaminase subfamily. Zn(2+) serves as cofactor.

It carries out the reaction adenosine + H2O + H(+) = inosine + NH4(+). The catalysed reaction is 2'-deoxyadenosine + H2O + H(+) = 2'-deoxyinosine + NH4(+). Catalyzes the hydrolytic deamination of adenosine and 2-deoxyadenosine. The polypeptide is Adenosine deaminase (Clostridium botulinum (strain ATCC 19397 / Type A)).